Here is a 180-residue protein sequence, read N- to C-terminus: Large ribosomal subunit protein uL5 (180 aa).

Belongs to the universal ribosomal protein uL5 family. In terms of assembly, part of the 50S ribosomal subunit; part of the 5S rRNA/L5/L18/L25 subcomplex. Contacts the 5S rRNA and the P site tRNA. Forms a bridge to the 30S subunit in the 70S ribosome.

Its function is as follows. This is one of the proteins that bind and probably mediate the attachment of the 5S RNA into the large ribosomal subunit, where it forms part of the central protuberance. In the 70S ribosome it contacts protein S13 of the 30S subunit (bridge B1b), connecting the 2 subunits; this bridge is implicated in subunit movement. Contacts the P site tRNA; the 5S rRNA and some of its associated proteins might help stabilize positioning of ribosome-bound tRNAs. The chain is Large ribosomal subunit protein uL5 from Chlamydia trachomatis serovar A (strain ATCC VR-571B / DSM 19440 / HAR-13).